Here is a 185-residue protein sequence, read N- to C-terminus: Elongation factor P (185 aa).

Belongs to the elongation factor P family.

It localises to the cytoplasm. It participates in protein biosynthesis; polypeptide chain elongation. In terms of biological role, involved in peptide bond synthesis. Stimulates efficient translation and peptide-bond synthesis on native or reconstituted 70S ribosomes in vitro. Probably functions indirectly by altering the affinity of the ribosome for aminoacyl-tRNA, thus increasing their reactivity as acceptors for peptidyl transferase. The protein is Elongation factor P of Carboxydothermus hydrogenoformans (strain ATCC BAA-161 / DSM 6008 / Z-2901).